The chain runs to 2393 residues: Leucine-rich repeat serine/threonine-protein kinase 1 (2393 aa).

10 ANK repeats span residues 56–86 (HGRT…SLNL), 90–120 (RGKT…PMKS), 123–152 (EGHC…KESE), 197–226 (EDET…HLLQ), 230–259 (SKDT…QLVK), 264–293 (EGST…PSEF), 317–347 (ECRT…SIDG), 361–390 (RGRT…DVNL), 407–437 (IGSG…DTDN), and 439–464 (ALRL…FADP). 5 LRR repeats span residues 532–553 (AITR…LFQM), 555–576 (SLRS…TYYI), 580–600 (SLEI…QFLS), 604–625 (QLQQ…IWLC), and 627–648 (ALKE…ARAS). The interval 649-675 (RGERPRLNNSNNNFNTQSPTQESNPIV) is disordered. LRR repeat units follow at residues 718–739 (TLTT…LACT), 742–763 (RLLI…ACVP), and 765–787 (HLRT…SPLH). A disordered region spans residues 797–844 (TSNGSMLPKRRNSPARQHRSRSKSAVRSQRSLSVSRHHALIDPQKEEE). A compositionally biased stretch (basic residues) spans 804–820 (PKRRNSPARQHRSRSKS). A compositionally biased stretch (polar residues) spans 821-830 (AVRSQRSLSV). Residues 835-844 (ALIDPQKEEE) show a composition bias toward basic and acidic residues. 4 LRR repeats span residues 856–877 (WLKT…NAAS), 883–905 (ALNV…ARLT), 906–928 (LLSM…YGML), and 930–952 (RLWS…VNVE). One can recognise a Roc domain in the interval 969 to 1167 (ESKTYHHLRL…NTIYRTAWEV (199 aa)). Residues 982-989 (GSDGVGKS), 1040-1044 (DFGGQ), and 1098-1101 (TNLD) contribute to the GTP site. Residues 1233–1422 (FYAACTFLHD…GFWSRLVTRI (190 aa)) enclose the COR domain. Disordered stretches follow at residues 1361-1382 (CPSP…TDQN) and 1596-1633 (RNGS…RTTG). Polar residues-rich tracts occupy residues 1366–1382 (GSPT…TDQN) and 1620–1633 (ITSS…RTTG). The 299-residue stretch at 1694–1992 (LKRSRMLGRG…LVGFCAAPEF (299 aa)) folds into the Protein kinase domain. ATP is bound by residues 1700-1708 (LGRGAFGFV) and Lys-1726. The active-site Proton acceptor is the Asp-1847.

It belongs to the protein kinase superfamily. TKL Ser/Thr protein kinase family. ROCO subfamily. Mg(2+) is required as a cofactor. It depends on Mn(2+) as a cofactor. As to expression, expressed in cell bodies, but not in dendritic or axonal processes, of adult head neurons. Also present in non-neuronal tissues, such as the body wall musculature and the epithelial cells of the nematode vulva.

It localises to the golgi apparatus. The enzyme catalyses L-seryl-[protein] + ATP = O-phospho-L-seryl-[protein] + ADP + H(+). It carries out the reaction L-threonyl-[protein] + ATP = O-phospho-L-threonyl-[protein] + ADP + H(+). Functionally, determines polarized sorting of synaptic vesicle (SV) proteins to the axons by excluding SV proteins from the dendrite-specific transport machinery in the Golgi. Role in stress response. Appears to antagonize the effects of pink-1 both in the regulation of axon guidance and stress response. The polypeptide is Leucine-rich repeat serine/threonine-protein kinase 1 (lrk-1) (Caenorhabditis elegans).